Here is a 1060-residue protein sequence, read N- to C-terminus: Beta-galactosidase (1060 aa).

The substrate site is built by N110 and D209. D209 provides a ligand contact to Na(+). Residues E432, H434, and E477 each coordinate Mg(2+). Residues E477 and E553 to H556 contribute to the substrate site. E477 functions as the Proton donor in the catalytic mechanism. E553 functions as the Nucleophile in the catalytic mechanism. Residue N613 participates in Mg(2+) binding. Na(+)-binding residues include F617 and N620. N620 and W1035 together coordinate substrate.

Belongs to the glycosyl hydrolase 2 family. As to quaternary structure, homotetramer. Mg(2+) is required as a cofactor. Na(+) serves as cofactor.

The catalysed reaction is Hydrolysis of terminal non-reducing beta-D-galactose residues in beta-D-galactosides.. The protein is Beta-galactosidase of Yersinia pestis bv. Antiqua (strain Antiqua).